The sequence spans 467 residues: Glutamate--tRNA ligase (467 aa).

The 'HIGH' region signature appears at 13–23 (PSPTGYLHVGG). The 'KMSKS' region signature appears at 245 to 249 (KLSKR). Residue lysine 248 participates in ATP binding.

This sequence belongs to the class-I aminoacyl-tRNA synthetase family. Glutamate--tRNA ligase type 1 subfamily. As to quaternary structure, monomer.

It localises to the cytoplasm. The enzyme catalyses tRNA(Glu) + L-glutamate + ATP = L-glutamyl-tRNA(Glu) + AMP + diphosphate. Functionally, catalyzes the attachment of glutamate to tRNA(Glu) in a two-step reaction: glutamate is first activated by ATP to form Glu-AMP and then transferred to the acceptor end of tRNA(Glu). In Herminiimonas arsenicoxydans, this protein is Glutamate--tRNA ligase.